The chain runs to 120 residues: UPF0102 protein TW312 (120 aa).

Belongs to the UPF0102 family.

The polypeptide is UPF0102 protein TW312 (Tropheryma whipplei (strain TW08/27) (Whipple's bacillus)).